Reading from the N-terminus, the 31-residue chain is GTFPCGESCVFIPCLTSAIGCSCKSKVCYKN.

Positions 1–31 (GTFPCGESCVFIPCLTSAIGCSCKSKVCYKN) form a cross-link, cyclopeptide (Gly-Asn). 3 disulfides stabilise this stretch: cysteine 5/cysteine 21, cysteine 9/cysteine 23, and cysteine 14/cysteine 28.

This is a cyclic peptide.

In terms of biological role, probably participates in a plant defense mechanism. Has cytotoxic activity, active against a human lymphoma cell line with an IC(50) of 0.96 uM. The sequence is that of Cyclotide vibi-G from Viola biflora (Yellow wood violet).